Here is a 298-residue protein sequence, read N- to C-terminus: Triosephosphate isomerase, chloroplastic (298 aa).

Positions 1-18 (MAARRPSPPPASPPPPRP) are enriched in pro residues. The interval 1–32 (MAARRPSPPPASPPPPRPRSTTTTRTTSSASA) is disordered. A chloroplast-targeting transit peptide spans 1 to 43 (MAARRPSPPPASPPPPRPRSTTTTRTTSSASAAPAAAQRLVAM). The segment covering 19–32 (RSTTTTRTTSSASA) has biased composition (low complexity). The substrate site is built by Asn-54 and Lys-56. The active-site Electrophile is the His-138. Residue Cys-186 is modified to Cysteine derivative. The active-site Proton acceptor is the Glu-208.

Belongs to the triosephosphate isomerase family. As to quaternary structure, homodimer.

Its subcellular location is the plastid. It localises to the chloroplast. It catalyses the reaction D-glyceraldehyde 3-phosphate = dihydroxyacetone phosphate. Its pathway is carbohydrate biosynthesis; Calvin cycle. This chain is Triosephosphate isomerase, chloroplastic, found in Secale cereale (Rye).